The following is a 458-amino-acid chain: MSKAWSGRFKEDTSKDVELFTESISFDKALAMYDLEQDFAHLEALLKAGVISKDSYENIKSGLKKIKQEIEKNEFYFDISKEDIHMNIESRLYELIGEDAKKLHTGRSRNDQVNTDLRLYLKDHILKIFELLKALKQQLVLKAKEYEDLIMPGYTHLQRAQPVLVAHYLLSFKEAFLRDSQRLIDAYRRIDTLTLGSGALAGADFPLDRFLEASILNFSKISRNSMDAVADRDFAIEYMFCLSSIAMHLSRMAEDFIIFNTEEFKFIDLPDSLCTGSSIMPQKKNPDVLELIRGKAGRVYANLINLMVNLKGLPMTYNRDLQEDKEPIFDATNTILNSLKMMILIIKDIRFRQNIEAGNLLLATDLANYLVEKNIPFREAHHIVGNIVAYAIENQKPLESLTKEELNNFSKAFDKDAKDIISKESSILRKKTYGSTNKDFVKKQIDLSSSEESIDKNL.

The protein belongs to the lyase 1 family. Argininosuccinate lyase subfamily.

It is found in the cytoplasm. The catalysed reaction is 2-(N(omega)-L-arginino)succinate = fumarate + L-arginine. It participates in amino-acid biosynthesis; L-arginine biosynthesis; L-arginine from L-ornithine and carbamoyl phosphate: step 3/3. This chain is Argininosuccinate lyase, found in Hydrogenobaculum sp. (strain Y04AAS1).